The primary structure comprises 68 residues: Large ribosomal subunit protein bL33c (68 aa).

This sequence belongs to the bacterial ribosomal protein bL33 family.

The protein resides in the plastid. Its subcellular location is the chloroplast. The protein is Large ribosomal subunit protein bL33c of Pinus koraiensis (Korean pine).